A 1389-amino-acid chain; its full sequence is DNA-directed RNA polymerase subunit beta (1389 aa).

It belongs to the RNA polymerase beta chain family. In terms of assembly, in plastids the minimal PEP RNA polymerase catalytic core is composed of four subunits: alpha, beta, beta', and beta''. When a (nuclear-encoded) sigma factor is associated with the core the holoenzyme is formed, which can initiate transcription.

It is found in the plastid. Its subcellular location is the chloroplast. It carries out the reaction RNA(n) + a ribonucleoside 5'-triphosphate = RNA(n+1) + diphosphate. Its function is as follows. DNA-dependent RNA polymerase catalyzes the transcription of DNA into RNA using the four ribonucleoside triphosphates as substrates. The chain is DNA-directed RNA polymerase subunit beta from Phaeodactylum tricornutum (strain CCAP 1055/1).